A 111-amino-acid polypeptide reads, in one-letter code: Sulditoxin subunit B (111 aa).

The signal sequence occupies residues 1 to 19 (MKTLLLALAVVVLVCLGSA). Positions 20 to 34 (NELGLGRQQIDRGRR) are excised as a propeptide. Position 35 is a pyrrolidone carboxylic acid (glutamine 35). Disulfide bonds link cysteine 44–cysteine 68, cysteine 47–cysteine 55, cysteine 61–cysteine 87, cysteine 91–cysteine 102, and cysteine 103–cysteine 108.

This sequence belongs to the three-finger toxin family. Ancestral subfamily. Boigatoxin sub-subfamily. Heterodimer of sulditoxin subunits A and B; probably disulfide-linked. As to expression, expressed by the venom gland.

The protein resides in the secreted. Its function is as follows. Reptile-specific neurotoxin (tested on geckos). Inhibits nicotinic acetylcholine receptor (nAChR). Not toxic to mammals (tested on mice). In Spilotes sulphureus (Amazon puffing snake), this protein is Sulditoxin subunit B.